The chain runs to 477 residues: Protoporphyrinogen oxidase (477 aa).

FAD contacts are provided by residues 9–14 (GGGISG), W42, 57–60 (GPRG), V257, A449, and 454–456 (VAV).

This sequence belongs to the protoporphyrinogen/coproporphyrinogen oxidase family. Protoporphyrinogen oxidase subfamily. In terms of assembly, monomer. Homodimer. Requires FAD as cofactor.

Its subcellular location is the mitochondrion inner membrane. It catalyses the reaction protoporphyrinogen IX + 3 O2 = protoporphyrin IX + 3 H2O2. The protein operates within porphyrin-containing compound metabolism; protoporphyrin-IX biosynthesis; protoporphyrin-IX from protoporphyrinogen-IX: step 1/1. Catalyzes the 6-electron oxidation of protoporphyrinogen-IX to form protoporphyrin-IX. In Macaca fascicularis (Crab-eating macaque), this protein is Protoporphyrinogen oxidase (PPOX).